Here is a 382-residue protein sequence, read N- to C-terminus: Succinyl-diaminopimelate desuccinylase (382 aa).

Zn(2+) is bound at residue His-70. The active site involves Asp-72. Asp-103 is a binding site for Zn(2+). Glu-137 acts as the Proton acceptor in catalysis. Zn(2+) contacts are provided by Glu-138, Glu-166, and His-355.

This sequence belongs to the peptidase M20A family. DapE subfamily. As to quaternary structure, homodimer. Requires Zn(2+) as cofactor. It depends on Co(2+) as a cofactor.

It carries out the reaction N-succinyl-(2S,6S)-2,6-diaminopimelate + H2O = (2S,6S)-2,6-diaminopimelate + succinate. The protein operates within amino-acid biosynthesis; L-lysine biosynthesis via DAP pathway; LL-2,6-diaminopimelate from (S)-tetrahydrodipicolinate (succinylase route): step 3/3. In terms of biological role, catalyzes the hydrolysis of N-succinyl-L,L-diaminopimelic acid (SDAP), forming succinate and LL-2,6-diaminopimelate (DAP), an intermediate involved in the bacterial biosynthesis of lysine and meso-diaminopimelic acid, an essential component of bacterial cell walls. The sequence is that of Succinyl-diaminopimelate desuccinylase from Paracoccus denitrificans (strain Pd 1222).